The sequence spans 423 residues: TNF receptor-associated factor family protein DDB_G0277243 (423 aa).

The RING-type; degenerate zinc-finger motif lies at 20–66 (CSICVDPVLNSLPLEQHQALSCKNGHLLCQACWGKQLALRKECCICK). TRAF-type zinc fingers lie at residues 124 to 179 (SHLR…NDMP) and 180 to 237 (THIE…CYLS). Residues 287-411 (RYKGNWTIEN…DGKLTINIDV (125 aa)) form the MATH domain.

This sequence belongs to the TNF receptor-associated factor family. A subfamily.

It localises to the cytoplasm. Probable adapter protein and signal transducer that links members of the tumor necrosis factor receptor family to different signaling pathways by association with the receptor cytoplasmic domain and kinases. In Dictyostelium discoideum (Social amoeba), this protein is TNF receptor-associated factor family protein DDB_G0277243.